Here is a 304-residue protein sequence, read N- to C-terminus: Aquaglyceroporin-3 (304 aa).

Residues 1-68 are Cytoplasmic-facing; sequence MQSQPDNVAY…LRLNYRDYMG (68 aa). A helical membrane pass occupies residues 69-89; it reads ELLGTFVLLFMGNGVVATVII. The Extracellular segment spans residues 90 to 95; it reads DGKLGF. A helical transmembrane segment spans residues 96–116; sequence LSITLGWGIAVTMALYVSLGI. Topologically, residues 117 to 142 are cytoplasmic; that stretch reads SSGHLNPAVTVGNAVFGDFPWRKVPG. A helical membrane pass occupies residues 143–163; the sequence is YIAAQMLGAFLGAACAYGVFA. Topologically, residues 164-196 are extracellular; it reads DLLKAHGGGELIAFGEKGTAGVFSTYPRDSNGL. A helical membrane pass occupies residues 197-217; sequence FSCIFGEFICTAMLLFCVCGI. Topologically, residues 218 to 231 are cytoplasmic; the sequence is FDPNNSPAKGHEPL. Residues 232-252 form a helical membrane-spanning segment; the sequence is AVGALVFAIGNNIGYSTGYAI. Topologically, residues 253–277 are extracellular; it reads NPARDFGPRVFSSFLYGGEVFSHAN. The helical transmembrane segment at 278-298 threads the bilayer; sequence YYFWVPLVIPLFGGIFGLFLY. At 299-304 the chain is on the cytoplasmic side; that stretch reads KYFVPH.

The protein belongs to the MIP/aquaporin (TC 1.A.8) family.

The protein localises to the cell membrane. It catalyses the reaction glycerol(in) = glycerol(out). It carries out the reaction H2O(in) = H2O(out). The enzyme catalyses urea(in) = urea(out). Functionally, mediates water and glycerol transport across the cell membrane. Permeable to urea. Permeable to methylamine/methylammonium. Permeable to dihydroxyacetone. Permeable to erythritol and ribitol. The polypeptide is Aquaglyceroporin-3 (Trypanosoma brucei brucei).